A 441-amino-acid polypeptide reads, in one-letter code: Importin subunit alpha-8 (441 aa).

ARM repeat units lie at residues 39-79 (QRDI…NIAV), 80-118 (DNPGVVVNNNAVPVLIQLIASPKDYVREQAIWTLSNVAG), 121-158 (IHYRDFVLNSGVLMPLLRLLYKDTTLRIATWALRNLCR), 160-199 (KPHPAFDQVKPALPALEILLHSHDEDVLKNACMALCHLSE), 202-241 (EDGIQSVIEAGFVPKLVQILQLPSPVVLVPALLTIGAMTA), 244-284 (HQQT…NITA), 287-326 (KEQIQSVIDANLIPILVNLAQDTDFYMKKEAVWAISNMAL), and 330-370 (HDQI…NMLK).

Belongs to the importin alpha family. In terms of assembly, forms a complex with importin subunit beta-1.

Its subcellular location is the nucleus envelope. Its function is as follows. Binds to conventional NLS motifs and mediates nuclear protein import across the nuclear envelope. The sequence is that of Importin subunit alpha-8 from Arabidopsis thaliana (Mouse-ear cress).